A 140-amino-acid polypeptide reads, in one-letter code: Small ribosomal subunit protein uS12m (140 aa).

It belongs to the universal ribosomal protein uS12 family.

It is found in the mitochondrion. The sequence is that of Small ribosomal subunit protein uS12m (mrps12) from Dictyostelium discoideum (Social amoeba).